Reading from the N-terminus, the 105-residue chain is Thiosulfate sulfurtransferase GlpE (105 aa).

Positions 16–104 (DKEDVVIADI…WEAAYSEKVE (89 aa)) constitute a Rhodanese domain. Cys-64 (cysteine persulfide intermediate) is an active-site residue.

It belongs to the GlpE family.

It localises to the cytoplasm. It carries out the reaction thiosulfate + hydrogen cyanide = thiocyanate + sulfite + 2 H(+). The catalysed reaction is thiosulfate + [thioredoxin]-dithiol = [thioredoxin]-disulfide + hydrogen sulfide + sulfite + 2 H(+). Its function is as follows. Transferase that catalyzes the transfer of sulfur from thiosulfate to thiophilic acceptors such as cyanide or dithiols. May function in a CysM-independent thiosulfate assimilation pathway by catalyzing the conversion of thiosulfate to sulfite, which can then be used for L-cysteine biosynthesis. This chain is Thiosulfate sulfurtransferase GlpE, found in Pseudoalteromonas translucida (strain TAC 125).